The primary structure comprises 750 residues: Glutamate carboxypeptidase 2 (750 aa).

The Cytoplasmic segment spans residues 1–19 (MWNLLHETDSAVATARRPR). Ser-10 carries the post-translational modification Phosphoserine. A helical; Signal-anchor for type II membrane protein transmembrane segment spans residues 20-43 (WLCAGALVLAGGFFLLGFLFGWFI). Over 44–750 (KSSNEATNIT…AAAETLSEVA (707 aa)) the chain is Extracellular. N-linked (GlcNAc...) asparagine glycosylation is found at Asn-51, Asn-76, Asn-121, Asn-140, Asn-153, and Asn-195. Positions 210 and 257 each coordinate substrate. Ca(2+)-binding residues include Thr-269 and Tyr-272. The tract at residues 274-587 (ANEYAYRRGI…QVRGGMVFEL (314 aa)) is NAALADase. Residue Asn-336 is glycosylated (N-linked (GlcNAc...) asparagine). The Zn(2+) site is built by His-377 and Asp-387. Glu-424 contributes to the substrate binding site. Glu-424 acts as the Nucleophile; for NAALADase activity in catalysis. A Zn(2+)-binding site is contributed by Glu-425. Ca(2+) contacts are provided by Glu-433 and Glu-436. Asp-453 contributes to the Zn(2+) binding site. Asn-459 and Asn-476 each carry an N-linked (GlcNAc...) asparagine glycan. Substrate is bound by residues 517–518 (SG), Asn-519, 534–536 (RAR), Tyr-552, and 552–553 (YH). Residue His-553 coordinates Zn(2+). Residue Ser-628 is the Charge relay system of the active site. A glycan (N-linked (GlcNAc...) asparagine) is linked at Asn-638. Residues Asp-666 and His-689 each act as charge relay system in the active site. 699 to 700 (KY) serves as a coordination point for substrate.

Belongs to the peptidase M28 family. M28B subfamily. Homodimer. The cofactor is Zn(2+). Post-translationally, the first two amino acids at the N-terminus of isoform PSMA' appear to be cleaved by limited proteolysis. The N-terminus is blocked. As to expression, highly expressed in prostate epithelium. Detected in urinary bladder, kidney, testis, ovary, fallopian tube, breast, adrenal gland, liver, esophagus, stomach, small intestine, colon and brain (at protein level). Detected in the small intestine, brain, kidney, liver, spleen, colon, trachea, spinal cord and the capillary endothelium of a variety of tumors. Expressed specifically in jejunum brush border membranes. In the brain, highly expressed in the ventral striatum and brain stem. Also expressed in fetal liver and kidney. Isoform PSMA' is the most abundant form in normal prostate. Isoform PSMA-1 is the most abundant form in primary prostate tumors. Isoform PSMA-9 is specifically expressed in prostate cancer.

The protein localises to the cell membrane. It is found in the cytoplasm. It carries out the reaction Release of an unsubstituted, C-terminal glutamyl residue, typically from Ac-Asp-Glu or folylpoly-gamma-glutamates.. The NAALADase activity is inhibited by beta-NAAG, quisqualic acid, 2-(phosphonomethyl) pentanedioic acid (PMPA) and EDTA. Activated by cobalt. In terms of biological role, has both folate hydrolase and N-acetylated-alpha-linked-acidic dipeptidase (NAALADase) activity. Has a preference for tri-alpha-glutamate peptides. In the intestine, required for the uptake of folate. In the brain, modulates excitatory neurotransmission through the hydrolysis of the neuropeptide, N-aceylaspartylglutamate (NAAG), thereby releasing glutamate. Involved in prostate tumor progression. Functionally, also exhibits a dipeptidyl-peptidase IV type activity. In vitro, cleaves Gly-Pro-AMC. The sequence is that of Glutamate carboxypeptidase 2 from Homo sapiens (Human).